A 175-amino-acid polypeptide reads, in one-letter code: Nucleoside-triphosphatase THEP1 (175 aa).

ATP-binding positions include 8 to 15 and 99 to 106; these read GSPGVGKS and LVVIDEIG.

This sequence belongs to the THEP1 NTPase family.

It catalyses the reaction a ribonucleoside 5'-triphosphate + H2O = a ribonucleoside 5'-diphosphate + phosphate + H(+). Its function is as follows. Has nucleotide phosphatase activity towards ATP, GTP, CTP, TTP and UTP. May hydrolyze nucleoside diphosphates with lower efficiency. This chain is Nucleoside-triphosphatase THEP1, found in Methanosarcina acetivorans (strain ATCC 35395 / DSM 2834 / JCM 12185 / C2A).